The following is a 178-amino-acid chain: MSKKEEKVLINEEIVDLTDRVRLVDGEGEPKIVDSSKALEIAYNKGLDLVLVAPNANPPVAKVMDYGKYKYEQEKKKKEAKKKQVKIEVKEIKFTSKIQENDINYKVKHIKEFLEKGKHVKLRVFLRGRELATPEKGFEVINKVWDMISDVAEKQNEPKLEGNYINLLVTPIKKKIKK.

It belongs to the IF-3 family. Monomer.

The protein localises to the cytoplasm. Its function is as follows. IF-3 binds to the 30S ribosomal subunit and shifts the equilibrium between 70S ribosomes and their 50S and 30S subunits in favor of the free subunits, thus enhancing the availability of 30S subunits on which protein synthesis initiation begins. The sequence is that of Translation initiation factor IF-3 from Nautilia profundicola (strain ATCC BAA-1463 / DSM 18972 / AmH).